Here is a 328-residue protein sequence, read N- to C-terminus: Transcription initiation factor IIE subunit beta (328 aa).

Residues 32–105 are disordered; the sequence is QKKTNDTVIT…SSPSKKVRPG (74 aa). At serine 52 the chain carries Phosphoserine. The span at 85–94 shows a compositional bias: acidic residues; it reads LDDDDDDEDF. A phosphoserine mark is found at serine 97 and serine 106. The segment at residues 113 to 187 is a DNA-binding region (TFIIE beta); sequence QANQTDISKS…FKYLSTYDVH (75 aa).

It belongs to the TFIIE beta subunit family. TFIIE is a tetramer of two alpha (TFA1) and two beta (TFA2) subunits.

The protein resides in the nucleus. Functionally, recruits TFIIH to the initiation complex and stimulates the RNA polymerase II C-terminal domain kinase and DNA-dependent ATPase activities of TFIIH. Both TFIIH and TFIIE are required for promoter clearance by RNA polymerase. The polypeptide is Transcription initiation factor IIE subunit beta (TFA2) (Saccharomyces cerevisiae (strain ATCC 204508 / S288c) (Baker's yeast)).